A 272-amino-acid polypeptide reads, in one-letter code: Bifunctional protein FolD (272 aa).

NADP(+)-binding positions include 155 to 157, Ser182, and Ile223; that span reads GRS.

The protein belongs to the tetrahydrofolate dehydrogenase/cyclohydrolase family. As to quaternary structure, homodimer.

It carries out the reaction (6R)-5,10-methylene-5,6,7,8-tetrahydrofolate + NADP(+) = (6R)-5,10-methenyltetrahydrofolate + NADPH. The catalysed reaction is (6R)-5,10-methenyltetrahydrofolate + H2O = (6R)-10-formyltetrahydrofolate + H(+). It functions in the pathway one-carbon metabolism; tetrahydrofolate interconversion. In terms of biological role, catalyzes the oxidation of 5,10-methylenetetrahydrofolate to 5,10-methenyltetrahydrofolate and then the hydrolysis of 5,10-methenyltetrahydrofolate to 10-formyltetrahydrofolate. This Fervidobacterium nodosum (strain ATCC 35602 / DSM 5306 / Rt17-B1) protein is Bifunctional protein FolD.